The chain runs to 329 residues: Acetyl-coenzyme A carboxylase carboxyl transferase subunit alpha (329 aa).

Residues 40-294 (QLETLAARRR…KNALEKHLSE (255 aa)) enclose the CoA carboxyltransferase C-terminal domain.

The protein belongs to the AccA family. As to quaternary structure, acetyl-CoA carboxylase is a heterohexamer composed of biotin carboxyl carrier protein (AccB), biotin carboxylase (AccC) and two subunits each of ACCase subunit alpha (AccA) and ACCase subunit beta (AccD).

The protein localises to the cytoplasm. The enzyme catalyses N(6)-carboxybiotinyl-L-lysyl-[protein] + acetyl-CoA = N(6)-biotinyl-L-lysyl-[protein] + malonyl-CoA. Its pathway is lipid metabolism; malonyl-CoA biosynthesis; malonyl-CoA from acetyl-CoA: step 1/1. In terms of biological role, component of the acetyl coenzyme A carboxylase (ACC) complex. First, biotin carboxylase catalyzes the carboxylation of biotin on its carrier protein (BCCP) and then the CO(2) group is transferred by the carboxyltransferase to acetyl-CoA to form malonyl-CoA. The protein is Acetyl-coenzyme A carboxylase carboxyl transferase subunit alpha of Prochlorococcus marinus (strain NATL2A).